The chain runs to 108 residues: TYRO protein tyrosine kinase-binding protein (108 aa).

A signal peptide spans 1–25 (MEGLRPSDRLLSLLLTVGGLSLVLA). Residues 26–36 (QSECNCSSVSP) lie on the Extracellular side of the membrane. The helical transmembrane segment at 37–57 (GVLAGIVLGDLMLTLLIALAV) threads the bilayer. Asp-46 lines the Ca(2+) pocket. At 58–108 (YYLGRLVPRGRGATEVTRKQHIPETESPYQELQGQRTDVYSDLNTQRPYYK) the chain is on the cytoplasmic side. Residues 71–108 (TEVTRKQHIPETESPYQELQGQRTDVYSDLNTQRPYYK) are disordered. The ITAM domain occupies 75 to 103 (RKQHIPETESPYQELQGQRTDVYSDLNTQ). Residues 84-108 (SPYQELQGQRTDVYSDLNTQRPYYK) show a composition bias toward polar residues. 2 positions are modified to phosphotyrosine: Tyr-86 and Tyr-97.

It belongs to the TYROBP family. Homodimer; disulfide-linked. Homotrimer; disulfide-linked. Homotetramer; disulfide-linked. Homotrimers and homotetramers form when low levels of partner receptors are available and is competitive with assembly with interacting receptors. They may represent alternative oligomerization states or may be intermediates in the receptor assembly process. Binding of a metal cation aids in homooligomerization through coordination of the metal ion by the subunits of the oligomer. Interacts with TREM1. Interacts with TREM2. Interacts with CLECSF5. Interacts with CD300LB and CD300C2. Interacts with CD300E. Interacts (via ITAM domain) with SYK (via SH2 domains); activates SYK mediating neutrophils and macrophages integrin-mediated activation. Interacts with KLRC2. Interacts with CD300H. Interacts with KLRD1. Interacts with SIGLEC1. Following ligand binding by associated receptors, tyrosine phosphorylated in the ITAM domain which leads to activation of additional tyrosine kinases and subsequent cell activation.

Its subcellular location is the cell membrane. Its function is as follows. Adapter protein which non-covalently associates with activating receptors found on the surface of a variety of immune cells to mediate signaling and cell activation following ligand binding by the receptors. TYROBP is tyrosine-phosphorylated in the ITAM domain following ligand binding by the associated receptors which leads to activation of additional tyrosine kinases and subsequent cell activation. Also has an inhibitory role in some cells. Non-covalently associates with activating receptors of the CD300 family to mediate cell activation. Also mediates cell activation through association with activating receptors of the CD200R family. Required for neutrophil activation mediated by integrin. Required for the activation of myeloid cells mediated by the CLEC5A/MDL1 receptor. Associates with natural killer (NK) cell receptors such as the KLRD1/KLRC2 heterodimer to mediate NK cell activation. Associates with TREM1 to mediate activation of neutrophils and monocytes. Associates with TREM2 on monocyte-derived dendritic cells to mediate up-regulation of chemokine receptor CCR7 and dendritic cell maturation and survival. Association with TREM2 mediates cytokine-induced formation of multinucleated giant cells which are formed by the fusion of macrophages. Stabilizes the TREM2 C-terminal fragment (TREM2-CTF) produced by TREM2 ectodomain shedding which suppresses the release of pro-inflammatory cytokines. In microglia, required with TREM2 for phagocytosis of apoptotic neurons. Required with ITGAM/CD11B in microglia to control production of microglial superoxide ions which promote the neuronal apoptosis that occurs during brain development. Promotes pro-inflammatory responses in microglia following nerve injury which accelerates degeneration of injured neurons. Positively regulates the expression of the IRAK3/IRAK-M kinase and IL10 production by liver dendritic cells and inhibits their T cell allosimulatory ability. Negatively regulates B cell proliferation. Required for CSF1-mediated osteoclast cytoskeletal organization. Positively regulates multinucleation during osteoclast development. This Bos taurus (Bovine) protein is TYRO protein tyrosine kinase-binding protein.